Consider the following 549-residue polypeptide: Ribosomal protein S6 kinase-like 1 (549 aa).

Residues 87–115 form the MIT domain; the sequence is IHVDPNKERREAVKLKITKYLRRAEEIFN. A Protein kinase domain is found at 145–539; that stretch reads SAVEQLRGCR…VSKLKSHPFF (395 aa). ATP-binding positions include 151 to 159 and Lys177; that span reads RGCRVVGVI. The segment at 260-325 is disordered; sequence LTPARLPSGH…SDLPKAPGGH (66 aa). The active-site Proton acceptor is Asp412.

It belongs to the protein kinase superfamily. Ser/Thr protein kinase family. S6 kinase subfamily.

The enzyme catalyses L-seryl-[protein] + ATP = O-phospho-L-seryl-[protein] + ADP + H(+). The catalysed reaction is L-threonyl-[protein] + ATP = O-phospho-L-threonyl-[protein] + ADP + H(+). The protein is Ribosomal protein S6 kinase-like 1 (RPS6KL1) of Pongo abelii (Sumatran orangutan).